A 366-amino-acid chain; its full sequence is Chorismate synthase (366 aa).

Arginine 48 provides a ligand contact to NADP(+). FMN is bound by residues 125 to 127 (RSS), 241 to 242 (NA), glycine 285, 300 to 304 (KPTSS), and arginine 326.

This sequence belongs to the chorismate synthase family. In terms of assembly, homotetramer. Requires FMNH2 as cofactor.

It carries out the reaction 5-O-(1-carboxyvinyl)-3-phosphoshikimate = chorismate + phosphate. Its pathway is metabolic intermediate biosynthesis; chorismate biosynthesis; chorismate from D-erythrose 4-phosphate and phosphoenolpyruvate: step 7/7. Functionally, catalyzes the anti-1,4-elimination of the C-3 phosphate and the C-6 proR hydrogen from 5-enolpyruvylshikimate-3-phosphate (EPSP) to yield chorismate, which is the branch point compound that serves as the starting substrate for the three terminal pathways of aromatic amino acid biosynthesis. This reaction introduces a second double bond into the aromatic ring system. The protein is Chorismate synthase of Paracoccus denitrificans (strain Pd 1222).